A 430-amino-acid polypeptide reads, in one-letter code: T-kininogen 2 (430 aa).

The N-terminal stretch at 1 to 18 (MKLITILLLCSRLLPSLA) is a signal peptide. Position 19 is a pyrrolidone carboxylic acid (Q19). One can recognise a Cystatin kininogen-type 1 domain in the interval 28-131 (CNDETVFQAV…TQICNITPGK (104 aa)). 9 cysteine pairs are disulfide-bonded: C28/C404, C83/C94, C107/C125, C141/C144, C205/C217, C228/C247, C263/C266, C327/C339, and C350/C369. A glycan (N-linked (GlcNAc...) asparagine) is linked at N82. Residues 150–253 (MDSSDLKPVL…SQSCDLYPGD (104 aa)) enclose the Cystatin kininogen-type 2 domain. N168 and N204 each carry an N-linked (GlcNAc...) asparagine glycan. Positions 272 to 375 (VDSPELKEAL…TVRCQALDMM (104 aa)) constitute a Cystatin kininogen-type 3 domain. An N-linked (GlcNAc...) asparagine glycan is attached at N326. Positions 410-430 (LSKAGAGPAPDHQAEASTVTP) are disordered.

As T-kinin is preceded by a Met instead of an Arg or Lys, it is not released from its precursor by either tissue or plasma kallikrein. As to expression, plasma.

Its subcellular location is the secreted. The protein resides in the extracellular space. Its function is as follows. Kininogens are plasma glycoproteins with a number of functions: (1) as precursor of the active peptide bradykinin they effect smooth muscle contraction, induction of hypotension and increase of vascular permeability. (2) They play a role in blood coagulation by helping to position optimally prekallikrein and factor XI next to factor XII. (3) They are inhibitor of thiol proteases. This is T-kininogen 2 from Rattus norvegicus (Rat).